The chain runs to 128 residues: Large ribosomal subunit protein bL12 (128 aa).

It belongs to the bacterial ribosomal protein bL12 family. Homodimer. Part of the ribosomal stalk of the 50S ribosomal subunit. Forms a multimeric L10(L12)X complex, where L10 forms an elongated spine to which 2 to 4 L12 dimers bind in a sequential fashion. Binds GTP-bound translation factors.

In terms of biological role, forms part of the ribosomal stalk which helps the ribosome interact with GTP-bound translation factors. Is thus essential for accurate translation. The chain is Large ribosomal subunit protein bL12 from Sulfurihydrogenibium sp. (strain YO3AOP1).